The chain runs to 269 residues: Putative pyruvate, phosphate dikinase regulatory protein (269 aa).

153-160 serves as a coordination point for ADP; sequence GVSRTSKT.

It belongs to the pyruvate, phosphate/water dikinase regulatory protein family. PDRP subfamily.

It catalyses the reaction N(tele)-phospho-L-histidyl/L-threonyl-[pyruvate, phosphate dikinase] + ADP = N(tele)-phospho-L-histidyl/O-phospho-L-threonyl-[pyruvate, phosphate dikinase] + AMP + H(+). It carries out the reaction N(tele)-phospho-L-histidyl/O-phospho-L-threonyl-[pyruvate, phosphate dikinase] + phosphate + H(+) = N(tele)-phospho-L-histidyl/L-threonyl-[pyruvate, phosphate dikinase] + diphosphate. Its function is as follows. Bifunctional serine/threonine kinase and phosphorylase involved in the regulation of the pyruvate, phosphate dikinase (PPDK) by catalyzing its phosphorylation/dephosphorylation. The polypeptide is Putative pyruvate, phosphate dikinase regulatory protein (Pediococcus pentosaceus (strain ATCC 25745 / CCUG 21536 / LMG 10740 / 183-1w)).